The sequence spans 248 residues: Ferric nitrobindin-like protein (248 aa).

Polar residues-rich tracts occupy residues 1–25 and 32–43; these read MSSDKANNQSPDQGANTPAESTNSG and QAVNLAAEQSKS. Residues 1 to 49 are disordered; sequence MSSDKANNQSPDQGANTPAESTNSGPKLDGNQAVNLAAEQSKSTADKNL. The short motif at 82–88 is the GXWXGXG element; it reads GVWRGQG. The tract at residues 118–147 is disordered; it reads SRTWKINPPAEEGAEADGDEASAESAGEPE. Residues 129–139 are compositionally biased toward acidic residues; sequence EGAEADGDEAS.

This sequence belongs to the nitrobindin family.

The chain is Ferric nitrobindin-like protein from Corynebacterium urealyticum (strain ATCC 43042 / DSM 7109).